The primary structure comprises 163 residues: Endoribonuclease YbeY (163 aa).

Positions 129, 133, and 139 each coordinate Zn(2+).

Belongs to the endoribonuclease YbeY family. The cofactor is Zn(2+).

It is found in the cytoplasm. Single strand-specific metallo-endoribonuclease involved in late-stage 70S ribosome quality control and in maturation of the 3' terminus of the 16S rRNA. The polypeptide is Endoribonuclease YbeY (Picosynechococcus sp. (strain ATCC 27264 / PCC 7002 / PR-6) (Agmenellum quadruplicatum)).